Consider the following 428-residue polypeptide: Elongation factor 1-alpha (428 aa).

The tr-type G domain maps to 5-215 (KPHINIVFIG…ALDQMPEPPK (211 aa)). The segment at 14–21 (GHVDHGKS) is G1. Residue 14–21 (GHVDHGKS) participates in GTP binding. Ser-21 contributes to the Mg(2+) binding site. Residues 68-72 (GITID) form a G2 region. Residues 89-92 (DAPG) are G3. GTP contacts are provided by residues 89–93 (DAPGH) and 144–147 (NKMD). The interval 144 to 147 (NKMD) is G4. Residues 181–183 (SAW) are G5.

This sequence belongs to the TRAFAC class translation factor GTPase superfamily. Classic translation factor GTPase family. EF-Tu/EF-1A subfamily.

The protein localises to the cytoplasm. The catalysed reaction is GTP + H2O = GDP + phosphate + H(+). Functionally, GTP hydrolase that promotes the GTP-dependent binding of aminoacyl-tRNA to the A-site of ribosomes during protein biosynthesis. In Thermococcus celer, this protein is Elongation factor 1-alpha.